The following is a 152-amino-acid chain: Proteolipid protein 2 (152 aa).

Asn18 carries N-linked (GlcNAc...) asparagine glycosylation. Residues 19–137 enclose the MARVEL domain; that stretch reads FSRTRKGILL…DAYVTFPVRQ (119 aa). 3 helical membrane-spanning segments follow: residues 25-45, 48-68, and 85-105; these read GILL…FSAS, GYSS…VVYM, and FFRT…VLVE. Residue Asn108 is glycosylated (N-linked (GlcNAc...) asparagine). The chain crosses the membrane as a helical span at residues 112–132; that stretch reads IVAGVLGLIATCLFGYDAYVT.

As to expression, enriched in colonic mucosa. The expression of A4 follows a gradient along the crypto-villus axis with the most abundant message occurring in the lower half of the crypt.

It localises to the membrane. Its function is as follows. May play a role in cell differentiation in the intestinal epithelium. This chain is Proteolipid protein 2 (PLP2), found in Homo sapiens (Human).